The sequence spans 1330 residues: Protein PUTATIVE RECOMBINATION INITIATION DEFECT 1 (1330 aa).

Residues 1310-1330 form a disordered region; sequence REGRVSPIQEETRQMQTERIV.

In terms of assembly, interacts with SPO11-1. According to PubMed:28855712, may interact with SPO11-2; this is in contradiction with PubMed:9461215 which claims that it seems to not interact with SPO11-2. Binds to DFO, PRD3 and MTOPVIB. Facilitates an interaction between PRD3 and DFO. In terms of tissue distribution, expressed in flower buds.

The protein localises to the nucleus. In terms of biological role, involved in DNA cleavage that forms the double-strand breaks (DSB) that initiate meiotic recombination. In Arabidopsis thaliana (Mouse-ear cress), this protein is Protein PUTATIVE RECOMBINATION INITIATION DEFECT 1.